Reading from the N-terminus, the 155-residue chain is Small ribosomal subunit protein uS7c (155 aa).

The protein belongs to the universal ribosomal protein uS7 family. In terms of assembly, part of the 30S ribosomal subunit.

It is found in the plastid. The protein resides in the chloroplast. One of the primary rRNA binding proteins, it binds directly to 16S rRNA where it nucleates assembly of the head domain of the 30S subunit. The polypeptide is Small ribosomal subunit protein uS7c (rps7) (Marchantia polymorpha (Common liverwort)).